We begin with the raw amino-acid sequence, 1189 residues long: Putative structural protein VP1 (1189 aa).

Residues 981–1187 (TPTKKLLSSD…YVNALRGDLS (207 aa)) form the PPPDE domain. Catalysis depends on residues histidine 1004 and cysteine 1147.

It is found in the virion. This chain is Putative structural protein VP1 (S1), found in Aedes pseudoscutellaris reovirus (isolate France) (ApRV).